A 466-amino-acid polypeptide reads, in one-letter code: CCA-adding enzyme (466 aa).

Residues Ser-55 and Arg-58 each coordinate ATP. The CTP site is built by Ser-55 and Arg-58. 3 residues coordinate Mg(2+): Asp-67, Asp-69, and Asp-118. ATP contacts are provided by His-141, Lys-161, and Tyr-170. Positions 141, 161, and 170 each coordinate CTP.

The protein belongs to the tRNA nucleotidyltransferase/poly(A) polymerase family. Archaeal CCA-adding enzyme subfamily. In terms of assembly, homodimer. Mg(2+) serves as cofactor.

It carries out the reaction a tRNA precursor + 2 CTP + ATP = a tRNA with a 3' CCA end + 3 diphosphate. The catalysed reaction is a tRNA with a 3' CCA end + 2 CTP + ATP = a tRNA with a 3' CCACCA end + 3 diphosphate. In terms of biological role, catalyzes the addition and repair of the essential 3'-terminal CCA sequence in tRNAs without using a nucleic acid template. Adds these three nucleotides in the order of C, C, and A to the tRNA nucleotide-73, using CTP and ATP as substrates and producing inorganic pyrophosphate. tRNA 3'-terminal CCA addition is required both for tRNA processing and repair. Also involved in tRNA surveillance by mediating tandem CCA addition to generate a CCACCA at the 3' terminus of unstable tRNAs. While stable tRNAs receive only 3'-terminal CCA, unstable tRNAs are marked with CCACCA and rapidly degraded. This is CCA-adding enzyme from Haloarcula marismortui (strain ATCC 43049 / DSM 3752 / JCM 8966 / VKM B-1809) (Halobacterium marismortui).